Reading from the N-terminus, the 438-residue chain is Aspartate--tRNA(Asp/Asn) ligase (438 aa).

Position 176 (Glu176) interacts with L-aspartate. Positions 198–201 (QLYK) are aspartate. Arg220 lines the L-aspartate pocket. Residues 220–222 (RAE), 228–230 (RHL), and Glu361 contribute to the ATP site. Residues Glu361 and Ser364 each coordinate Mg(2+). Residues Ser364 and Arg368 each contribute to the L-aspartate site. Residue 409 to 412 (GADR) coordinates ATP.

This sequence belongs to the class-II aminoacyl-tRNA synthetase family. Type 2 subfamily. As to quaternary structure, homodimer. Mg(2+) is required as a cofactor.

It localises to the cytoplasm. It carries out the reaction tRNA(Asx) + L-aspartate + ATP = L-aspartyl-tRNA(Asx) + AMP + diphosphate. Functionally, aspartyl-tRNA synthetase with relaxed tRNA specificity since it is able to aspartylate not only its cognate tRNA(Asp) but also tRNA(Asn). Reaction proceeds in two steps: L-aspartate is first activated by ATP to form Asp-AMP and then transferred to the acceptor end of tRNA(Asp/Asn). This is Aspartate--tRNA(Asp/Asn) ligase from Methanococcus maripaludis (strain C7 / ATCC BAA-1331).